We begin with the raw amino-acid sequence, 222 residues long: Small ribosomal subunit protein uS3 (222 aa).

One can recognise a KH type-2 domain in the interval 38–106 (IRKFISEKLA…NVHINIVEIK (69 aa)).

Belongs to the universal ribosomal protein uS3 family. Part of the 30S ribosomal subunit. Forms a tight complex with proteins S10 and S14.

In terms of biological role, binds the lower part of the 30S subunit head. Binds mRNA in the 70S ribosome, positioning it for translation. The protein is Small ribosomal subunit protein uS3 of Lactobacillus johnsonii (strain CNCM I-12250 / La1 / NCC 533).